A 490-amino-acid chain; its full sequence is Glutamyl-tRNA(Gln) amidotransferase subunit A (490 aa).

Active-site charge relay system residues include lysine 78 and serine 153. The active-site Acyl-ester intermediate is serine 177.

Belongs to the amidase family. GatA subfamily. In terms of assembly, heterotrimer of A, B and C subunits.

It catalyses the reaction L-glutamyl-tRNA(Gln) + L-glutamine + ATP + H2O = L-glutaminyl-tRNA(Gln) + L-glutamate + ADP + phosphate + H(+). In terms of biological role, allows the formation of correctly charged Gln-tRNA(Gln) through the transamidation of misacylated Glu-tRNA(Gln) in organisms which lack glutaminyl-tRNA synthetase. The reaction takes place in the presence of glutamine and ATP through an activated gamma-phospho-Glu-tRNA(Gln). The protein is Glutamyl-tRNA(Gln) amidotransferase subunit A of Bdellovibrio bacteriovorus (strain ATCC 15356 / DSM 50701 / NCIMB 9529 / HD100).